Consider the following 553-residue polypeptide: Zinc finger protein with KRAB and SCAN domains 3 (553 aa).

Residues 28 to 49 (EQEESSPLAEETSWLGSPGPDR) are disordered. 2 positions are modified to phosphoserine: serine 33 and serine 44. Residues 51–133 (RQRFRAFRYP…ALLEYLDRQL (83 aa)) form the SCAN box domain. The residue at position 136 (threonine 136) is a Phosphothreonine. Lysine 176 participates in a covalent cross-link: Glycyl lysine isopeptide (Lys-Gly) (interchain with G-Cter in SUMO2). Threonine 206 is modified (phosphothreonine). Residues 213–273 (LKMEDVAPVL…RAEEYRDQKP (61 aa)) form the KRAB domain. At serine 223 the chain carries Phosphoserine. C2H2-type zinc fingers lie at residues 313–335 (FYCR…KRIH), 341–363 (YECE…QRVH), 369–391 (YECE…QRTH), 397–419 (YECD…HRIH), and 425–447 (YQCN…QRTH). Threonine 448 carries the phosphothreonine modification. 2 consecutive C2H2-type zinc fingers follow at residues 479 to 501 (YQCN…QKVH) and 507 to 529 (FECQ…QRRH).

It belongs to the krueppel C2H2-type zinc-finger protein family. As to expression, expressed in heart, brain, spleen, lung, liver, skeletal muscle, kidney and testis.

The protein resides in the nucleus. It is found in the cytoplasm. In terms of biological role, transcriptional factor that binds to the consensus sequence 5'-[GT][AG][AGT]GGGG-3' and acts as a repressor of autophagy. Specifically represses expression of genes involved in autophagy and lysosome biogenesis/function such as MAP1LC3B, ULK1 or WIPI2. Associates with chromatin at the ITGB4 and VEGF promoters. The sequence is that of Zinc finger protein with KRAB and SCAN domains 3 (Zkscan3) from Mus musculus (Mouse).